Here is a 265-residue protein sequence, read N- to C-terminus: ATP synthase subunit a (265 aa).

5 helical membrane passes run 25 to 45 (FWAV…LFLW), 88 to 108 (IAPL…MDLI), 142 to 162 (DLNT…IYSI), 207 to 227 (LFGN…IGFW), and 233 to 253 (FAWA…FMML).

Belongs to the ATPase A chain family. As to quaternary structure, F-type ATPases have 2 components, CF(1) - the catalytic core - and CF(0) - the membrane proton channel. CF(1) has five subunits: alpha(3), beta(3), gamma(1), delta(1), epsilon(1). CF(0) has three main subunits: a(1), b(2) and c(9-12). The alpha and beta chains form an alternating ring which encloses part of the gamma chain. CF(1) is attached to CF(0) by a central stalk formed by the gamma and epsilon chains, while a peripheral stalk is formed by the delta and b chains.

Its subcellular location is the cell inner membrane. Functionally, key component of the proton channel; it plays a direct role in the translocation of protons across the membrane. The polypeptide is ATP synthase subunit a (Idiomarina loihiensis (strain ATCC BAA-735 / DSM 15497 / L2-TR)).